A 145-amino-acid polypeptide reads, in one-letter code: Bacilliredoxin SSP1241 (145 aa).

The protein belongs to the bacilliredoxin family.

This Staphylococcus saprophyticus subsp. saprophyticus (strain ATCC 15305 / DSM 20229 / NCIMB 8711 / NCTC 7292 / S-41) protein is Bacilliredoxin SSP1241.